Reading from the N-terminus, the 333-residue chain is Biotin synthase (333 aa).

The Radical SAM core domain occupies Y47–A273. The [4Fe-4S] cluster site is built by C65, C69, and C72. [2Fe-2S] cluster-binding residues include C109, C141, C201, and R271.

This sequence belongs to the radical SAM superfamily. Biotin synthase family. In terms of assembly, homodimer. The cofactor is [4Fe-4S] cluster. It depends on [2Fe-2S] cluster as a cofactor.

It carries out the reaction (4R,5S)-dethiobiotin + (sulfur carrier)-SH + 2 reduced [2Fe-2S]-[ferredoxin] + 2 S-adenosyl-L-methionine = (sulfur carrier)-H + biotin + 2 5'-deoxyadenosine + 2 L-methionine + 2 oxidized [2Fe-2S]-[ferredoxin]. It participates in cofactor biosynthesis; biotin biosynthesis; biotin from 7,8-diaminononanoate: step 2/2. In terms of biological role, catalyzes the conversion of dethiobiotin (DTB) to biotin by the insertion of a sulfur atom into dethiobiotin via a radical-based mechanism. This Geobacillus kaustophilus (strain HTA426) protein is Biotin synthase.